The sequence spans 327 residues: Putative pumilio homolog 19 (327 aa).

Positions 1–324 (MAVSDNTFSM…NIANILDTFR (324 aa)) constitute a PUM-HD domain. Pumilio repeat units follow at residues 79–114 (SDSD…FCAA), 115–149 (ILRR…ALYE), 150–185 (RILY…DQLL), 186–222 (ELVV…NIAV), 223–260 (NLYG…ELLG), and 261–295 (CDGD…DLFW).

It is found in the cytoplasm. Functionally, sequence-specific RNA-binding protein that regulates translation and mRNA stability by binding the 3'-UTR of target mRNAs. The polypeptide is Putative pumilio homolog 19 (APUM19) (Arabidopsis thaliana (Mouse-ear cress)).